A 279-amino-acid polypeptide reads, in one-letter code: Thioredoxin-like 1-1, chloroplastic (279 aa).

Positions 56 to 202 (ALTERKARPL…FKDALAKHGP (147 aa)) constitute a Thioredoxin domain. Catalysis depends on nucleophile residues Cys-125 and Cys-128. Cys-125 and Cys-128 are oxidised to a cystine.

It belongs to the thioredoxin family.

In terms of biological role, probable thiol-disulfide oxidoreductase that may participate in various redox reactions. In Oryza sativa subsp. japonica (Rice), this protein is Thioredoxin-like 1-1, chloroplastic.